A 67-amino-acid chain; its full sequence is Cold shock-like protein CspE (67 aa).

The CSD domain occupies 5–64 (GKVKWFNSEKGFGFIEVEGGNDVFVHFSAITGDGFKSLDEGQEVSFEVEDGNRGPQAKNV).

In terms of assembly, homodimer.

The protein localises to the cytoplasm. Its function is as follows. Can bind to ATTGG and CCAAT motifs (Y-box motifs) of single-stranded oligonucleotides. The sequence is that of Cold shock-like protein CspE (cspE) from Bacillus anthracis.